Here is a 418-residue protein sequence, read N- to C-terminus: Gamma-glutamyl phosphate reductase (418 aa).

It belongs to the gamma-glutamyl phosphate reductase family.

It localises to the cytoplasm. It catalyses the reaction L-glutamate 5-semialdehyde + phosphate + NADP(+) = L-glutamyl 5-phosphate + NADPH + H(+). It functions in the pathway amino-acid biosynthesis; L-proline biosynthesis; L-glutamate 5-semialdehyde from L-glutamate: step 2/2. Catalyzes the NADPH-dependent reduction of L-glutamate 5-phosphate into L-glutamate 5-semialdehyde and phosphate. The product spontaneously undergoes cyclization to form 1-pyrroline-5-carboxylate. This chain is Gamma-glutamyl phosphate reductase, found in Thermodesulfovibrio yellowstonii (strain ATCC 51303 / DSM 11347 / YP87).